Reading from the N-terminus, the 296-residue chain is Lipoyl synthase (296 aa).

[4Fe-4S] cluster is bound by residues cysteine 37, cysteine 42, cysteine 48, cysteine 63, cysteine 67, cysteine 70, and serine 276. Positions 49–265 constitute a Radical SAM core domain; it reads WSKKHTTVMI…ERLAKTKGFL (217 aa).

This sequence belongs to the radical SAM superfamily. Lipoyl synthase family. Requires [4Fe-4S] cluster as cofactor.

It is found in the cytoplasm. The catalysed reaction is [[Fe-S] cluster scaffold protein carrying a second [4Fe-4S](2+) cluster] + N(6)-octanoyl-L-lysyl-[protein] + 2 oxidized [2Fe-2S]-[ferredoxin] + 2 S-adenosyl-L-methionine + 4 H(+) = [[Fe-S] cluster scaffold protein] + N(6)-[(R)-dihydrolipoyl]-L-lysyl-[protein] + 4 Fe(3+) + 2 hydrogen sulfide + 2 5'-deoxyadenosine + 2 L-methionine + 2 reduced [2Fe-2S]-[ferredoxin]. It functions in the pathway protein modification; protein lipoylation via endogenous pathway; protein N(6)-(lipoyl)lysine from octanoyl-[acyl-carrier-protein]: step 2/2. Functionally, catalyzes the radical-mediated insertion of two sulfur atoms into the C-6 and C-8 positions of the octanoyl moiety bound to the lipoyl domains of lipoate-dependent enzymes, thereby converting the octanoylated domains into lipoylated derivatives. The polypeptide is Lipoyl synthase (Rickettsia rickettsii (strain Iowa)).